A 72-amino-acid chain; its full sequence is Translation initiation factor IF-1 (72 aa).

Positions 1-72 (MAKEDVIEIE…TRGRITYRFK (72 aa)) constitute an S1-like domain.

The protein belongs to the IF-1 family. In terms of assembly, component of the 30S ribosomal translation pre-initiation complex which assembles on the 30S ribosome in the order IF-2 and IF-3, IF-1 and N-formylmethionyl-tRNA(fMet); mRNA recruitment can occur at any time during PIC assembly.

The protein localises to the cytoplasm. Functionally, one of the essential components for the initiation of protein synthesis. Stabilizes the binding of IF-2 and IF-3 on the 30S subunit to which N-formylmethionyl-tRNA(fMet) subsequently binds. Helps modulate mRNA selection, yielding the 30S pre-initiation complex (PIC). Upon addition of the 50S ribosomal subunit IF-1, IF-2 and IF-3 are released leaving the mature 70S translation initiation complex. The sequence is that of Translation initiation factor IF-1 from Streptococcus agalactiae serotype Ia (strain ATCC 27591 / A909 / CDC SS700).